The primary structure comprises 186 residues: 3-hydroxyanthranilate 3,4-dioxygenase (186 aa).

Arg-44 contacts O2. Fe cation contacts are provided by His-48, Glu-54, and His-96. Glu-54 is a substrate binding site. Substrate contacts are provided by Arg-100 and Glu-110. Cys-125, Cys-130, Cys-164, and Cys-167 together coordinate a divalent metal cation.

The protein belongs to the 3-HAO family. It depends on Fe(2+) as a cofactor.

It localises to the cytoplasm. It catalyses the reaction 3-hydroxyanthranilate + O2 = (2Z,4Z)-2-amino-3-carboxymuconate 6-semialdehyde. Its pathway is cofactor biosynthesis; NAD(+) biosynthesis; quinolinate from L-kynurenine: step 3/3. Its function is as follows. Catalyzes the oxidative ring opening of 3-hydroxyanthranilate to 2-amino-3-carboxymuconate semialdehyde, which spontaneously cyclizes to quinolinate. This Chaetomium globosum (strain ATCC 6205 / CBS 148.51 / DSM 1962 / NBRC 6347 / NRRL 1970) (Soil fungus) protein is 3-hydroxyanthranilate 3,4-dioxygenase.